The chain runs to 249 residues: Uridylate kinase (249 aa).

Residue 13–16 (KLSG) coordinates ATP. Position 55 (Gly55) interacts with UMP. The ATP site is built by Gly56 and Arg60. Residues Asp75 and 136–143 (IGNPFFTT) contribute to the UMP site. Residues Thr163, Phe169, and Asp172 each contribute to the ATP site.

This sequence belongs to the UMP kinase family. In terms of assembly, homohexamer.

The protein localises to the cytoplasm. The enzyme catalyses UMP + ATP = UDP + ADP. It participates in pyrimidine metabolism; CTP biosynthesis via de novo pathway; UDP from UMP (UMPK route): step 1/1. Its activity is regulated as follows. Inhibited by UTP. Catalyzes the reversible phosphorylation of UMP to UDP. The chain is Uridylate kinase from Baumannia cicadellinicola subsp. Homalodisca coagulata.